A 590-amino-acid chain; its full sequence is Protein ecdysoneless homolog (590 aa).

The disordered stretch occupies residues 445-464 (EDFYGVKNSDTDTDSDSLAD). Residues 455–464 (TDTDSDSLAD) are compositionally biased toward acidic residues.

Belongs to the ECD family.

It is found in the cytoplasm. The protein resides in the nucleus. In terms of biological role, involved in the regulation of carbohydrate metabolism. May act as a transcription factor. The sequence is that of Protein ecdysoneless homolog from Schizosaccharomyces pombe (strain 972 / ATCC 24843) (Fission yeast).